The chain runs to 347 residues: MSVMFDPDTAIYPFPPKPTPLSIDEKAYYREKIKRLLKERNAVMVAHYYTDPEIQQLAEETGGCISDSLEMARFGAKHPASTLLVAGVRFMGETAKILSPEKTILMPTLQAECSLDLGCPVEEFNAFCDAHPDRTVVVYANTSAAVKARADWVVTSSIAVELIDHLDSLGEKIIWAPDKHLGRYVQKQTGGDILCWQGACIVHDEFKTQALTRLQEEYPDAAILVHPESPQAIVDMADAVGSTSQLIAAAKTLPHQRLIVATDRGIFYKMQQAVPDKELLEAPTAGEGATCRSCAHCPWMAMNGLQAIAEALEQEGSNHEVHVDERLRERALVPLNRMLDFAATLRG.

Residues His-47 and Ser-68 each coordinate iminosuccinate. Cys-113 contributes to the [4Fe-4S] cluster binding site. Iminosuccinate is bound by residues 139 to 141 (YAN) and Ser-156. Cys-200 contributes to the [4Fe-4S] cluster binding site. Iminosuccinate contacts are provided by residues 226-228 (HPE) and Thr-243. Residue Cys-297 participates in [4Fe-4S] cluster binding.

This sequence belongs to the quinolinate synthase family. Type 1 subfamily. It depends on [4Fe-4S] cluster as a cofactor.

The protein localises to the cytoplasm. It carries out the reaction iminosuccinate + dihydroxyacetone phosphate = quinolinate + phosphate + 2 H2O + H(+). The protein operates within cofactor biosynthesis; NAD(+) biosynthesis; quinolinate from iminoaspartate: step 1/1. Catalyzes the condensation of iminoaspartate with dihydroxyacetone phosphate to form quinolinate. The protein is Quinolinate synthase of Escherichia coli (strain K12 / MC4100 / BW2952).